The primary structure comprises 649 residues: Acid beta-fructofuranosidase (649 aa).

Residues 1 to 22 lie on the Cytoplasmic side of the membrane; the sequence is MEHHKPLLPTSSHAAPTSSTRK. Positions 1–101 are cleaved as a propeptide — removed in mature form; sequence MEHHKPLLPT…NLLFAGEGGA (101 aa). Residues 23-43 form a helical; Signal-anchor for type II membrane protein membrane-spanning segment; the sequence is DLLFVLCGLLFLSSLVAYGGY. Over 44–649 the chain is Lumenal; that stretch reads RASGVPHAHL…PFPFNPDQKS (606 aa). Residues 52 to 75 form a disordered region; that stretch reads HLSSPTSNHQQDHQSPTSLPSSKW. Residues 54–72 are compositionally biased toward polar residues; the sequence is SSPTSNHQQDHQSPTSLPS. Substrate is bound by residues 127-130, Q146, W154, and 189-190; these read WMND and WT. D130 is an active-site residue. A glycan (N-linked (GlcNAc...) (complex) asparagine) is linked at N210. 253–254 contacts substrate; the sequence is RD. N275 carries N-linked (GlcNAc...) (complex) asparagine glycosylation. E308 and D341 together coordinate substrate. C498 and C546 are joined by a disulfide. A glycan (N-linked (GlcNAc...) (high mannose) asparagine) is linked at N618.

Belongs to the glycosyl hydrolase 32 family. As to quaternary structure, present in two forms, a 70 kDa monomer and a heterodimer of the 30 kDa and 38 kDa subunits. The ratio of the levels of the two forms within cells appears to be regulated developmentally.

The protein resides in the membrane. Its subcellular location is the vacuole lumen. It carries out the reaction Hydrolysis of terminal non-reducing beta-D-fructofuranoside residues in beta-D-fructofuranosides.. The protein operates within glycan biosynthesis; sucrose metabolism. Functionally, possible role in the continued mobilization of sucrose to sink organs. The sequence is that of Acid beta-fructofuranosidase (INVA) from Vigna radiata var. radiata (Mung bean).